We begin with the raw amino-acid sequence, 185 residues long: Elongation factor P (185 aa).

This sequence belongs to the elongation factor P family.

The protein resides in the cytoplasm. The protein operates within protein biosynthesis; polypeptide chain elongation. Functionally, involved in peptide bond synthesis. Stimulates efficient translation and peptide-bond synthesis on native or reconstituted 70S ribosomes in vitro. Probably functions indirectly by altering the affinity of the ribosome for aminoacyl-tRNA, thus increasing their reactivity as acceptors for peptidyl transferase. This chain is Elongation factor P, found in Aromatoleum aromaticum (strain DSM 19018 / LMG 30748 / EbN1) (Azoarcus sp. (strain EbN1)).